The sequence spans 97 residues: Lipolysis-activating peptide 1-alpha chain (97 aa).

Residues 1-21 form the signal peptide; it reads MNIMLFCSVFILVSLTGLSVS. Residues 25–88 enclose the LCN-type CS-alpha/beta domain; the sequence is PGNYPMSLYG…FWAAHKNHCK (64 aa). 3 cysteine pairs are disulfide-bonded: cysteine 39–cysteine 62, cysteine 48–cysteine 67, and cysteine 52–cysteine 69.

The protein belongs to the long (3 C-C) scorpion toxin superfamily. In terms of assembly, monomer (edited version) and heterodimer (non-edited version) of this alpha chain and a beta chain (AC P0CI43). In terms of tissue distribution, expressed by the venom gland.

It localises to the secreted. Its function is as follows. The heterodimer non-edited LVP1 induces lipolysis in rat adipocytes. Induction of lipolysis by LVP1 appears to be mediated through the beta-2 adrenergic receptor pathway (ADRB2). Functionally, the edited BmKBTx-like, similar to beta-toxins, may modulate voltage-gated sodium channels (Nav) and may block voltage-gated potassium channels (Kv). The chain is Lipolysis-activating peptide 1-alpha chain from Lychas mucronatus (Chinese swimming scorpion).